The following is a 607-amino-acid chain: Aspartate--tRNA(Asp/Asn) ligase (607 aa).

Glu176 provides a ligand contact to L-aspartate. An aspartate region spans residues 200–203; sequence QQFK. L-aspartate contacts are provided by Arg222 and His456. 222–224 provides a ligand contact to ATP; the sequence is RDE. Glu496 contacts ATP. Position 503 (Arg503) interacts with L-aspartate. 548 to 551 is an ATP binding site; that stretch reads GIDR.

Belongs to the class-II aminoacyl-tRNA synthetase family. Type 1 subfamily. Homodimer.

The protein localises to the cytoplasm. The catalysed reaction is tRNA(Asx) + L-aspartate + ATP = L-aspartyl-tRNA(Asx) + AMP + diphosphate. Its function is as follows. Aspartyl-tRNA synthetase with relaxed tRNA specificity since it is able to aspartylate not only its cognate tRNA(Asp) but also tRNA(Asn). Reaction proceeds in two steps: L-aspartate is first activated by ATP to form Asp-AMP and then transferred to the acceptor end of tRNA(Asp/Asn). This chain is Aspartate--tRNA(Asp/Asn) ligase, found in Parvibaculum lavamentivorans (strain DS-1 / DSM 13023 / NCIMB 13966).